The chain runs to 292 residues: Ribosome-inactivating protein saporin-2 (292 aa).

The N-terminal stretch at 1–24 (MKIYVVATIAWILLQFSAWTTTDA) is a signal peptide. Glu200 is an active-site residue.

The protein belongs to the ribosome-inactivating protein family. Type 1 RIP subfamily.

It carries out the reaction Endohydrolysis of the N-glycosidic bond at one specific adenosine on the 28S rRNA.. In terms of biological role, ribosome-inactivating protein of type 1, inhibits protein synthesis in animal cells. Useful as immunotoxin for pharmacological applications. This chain is Ribosome-inactivating protein saporin-2 (SAP2), found in Saponaria officinalis (Common soapwort).